Reading from the N-terminus, the 298-residue chain is Probable porphobilinogen deaminase (298 aa).

Cys241 carries the post-translational modification S-(dipyrrolylmethanemethyl)cysteine.

The protein belongs to the HMBS family. Requires dipyrromethane as cofactor.

The catalysed reaction is 4 porphobilinogen + H2O = hydroxymethylbilane + 4 NH4(+). Its pathway is porphyrin-containing compound metabolism; protoporphyrin-IX biosynthesis; coproporphyrinogen-III from 5-aminolevulinate: step 2/4. Tetrapolymerization of the monopyrrole PBG into the hydroxymethylbilane pre-uroporphyrinogen in several discrete steps. The sequence is that of Probable porphobilinogen deaminase from Methanopyrus kandleri (strain AV19 / DSM 6324 / JCM 9639 / NBRC 100938).